The sequence spans 418 residues: Histidine--tRNA ligase (418 aa).

It belongs to the class-II aminoacyl-tRNA synthetase family.

It localises to the cytoplasm. It carries out the reaction tRNA(His) + L-histidine + ATP = L-histidyl-tRNA(His) + AMP + diphosphate + H(+). The chain is Histidine--tRNA ligase from Methanococcus aeolicus (strain ATCC BAA-1280 / DSM 17508 / OCM 812 / Nankai-3).